The following is a 660-amino-acid chain: Putative ABC transporter ATP-binding MG390 (660 aa).

The Peptidase C39 domain maps to 6–126 (QEQQNECGIC…KLWTGYAATV (121 aa)). Cys-12 is a catalytic residue. 6 helical membrane passes run 150 to 170 (LVTFYVFIELIIIGISTLLAT), 188 to 208 (LVVLVVYFSCLKGLNLLLQVI), 265 to 285 (YIPNLIISCVVALIIGVLIGI), 290 to 310 (FLLIAIAQIVVNAGLFCYDFF), 379 to 399 (SFFQQGFDFAILGLGVIGIIE), and 402 to 422 (YQLSFLFYVFGIQSLFSTYAT). The 194-residue stretch at 464 to 657 (ISLENLSVTL…QNKINLTNYL (194 aa)) folds into the ABC transporter domain. Position 494–501 (494–501 (GQNGSGKS)) interacts with ATP.

The protein belongs to the ABC transporter superfamily.

The protein localises to the cell membrane. The polypeptide is Putative ABC transporter ATP-binding MG390 (Mycoplasma genitalium (strain ATCC 33530 / DSM 19775 / NCTC 10195 / G37) (Mycoplasmoides genitalium)).